Reading from the N-terminus, the 432-residue chain is MKLVLIDGEHYPDVISWAIKKLGDVCCAVFLGGSEKIGSIGEVERKIGVKVYHSPNYLDALRRALEENKVDEVVDLSDEPVLNYEDRFRIASLCMLYGVSYRGADFHFKPKPLKKTKKPSLAVIGTGKRVGKTAVSGFIARTLKEIAKPVIVTMGRGGPEEPELIEGDKFEITPEFLLKFAESGKHAASDHFEDALTSRVTTIGCRRCGGGMAGFPFFDVVDEGVKLAENLPNDLIILEGSGATFPPYRADRYVVVVGAKQKLDFVRGYFGTFRVSLADIVVVTMADSVGEERWKALRDAILEINPDVDLHFIAFRPRPLGNVSDKRLGLVMTSSEALPKAKKHLEGLGAEVPYTSDNLSKRPLLWRDLEGFRGIDAVAVELKAAAVDVVTRWALEQGIEVIYLDNEPVNIDGKDLRKAVLELGRALLGGRA.

The protein belongs to the cyclic 2,3-diphosphoglycerate synthetase family.

Its subcellular location is the cytoplasm. It carries out the reaction (2R)-2,3-bisphosphoglycerate + ATP + H(+) = cyclic (2R)-2,3-bisphosphoglycerate + ADP + phosphate. Its function is as follows. Catalyzes the formation of cyclic 2,3-diphosphoglycerate (cDPG) by formation of an intramolecular phosphoanhydride bond at the expense of ATP. The polypeptide is Cyclic 2,3-diphosphoglycerate synthetase (Thermococcus onnurineus (strain NA1)).